Here is a 319-residue protein sequence, read N- to C-terminus: Transmembrane and ubiquitin-like domain-containing protein 2 (319 aa).

Residues 36–56 (VMVVAGVVVLTLALVLAWLST) form a helical membrane-spanning segment. 2 disordered regions span residues 88 to 130 (VNQG…GDME) and 146 to 165 (QAGLESSRPEASLGLDDSTC). Residues 95 to 111 (PTEHPHPSGGSDDKAEE) are compositionally biased toward basic and acidic residues. The Ubiquitin-like domain maps to 173–246 (INVRLKFLND…IHCHRSPPGA (74 aa)). 2 helical membrane passes run 264-284 (LGVNVGSLMVPVFVVLLGVVW) and 293-313 (FFTAPATVSLVGVTVFFSFLV).

It localises to the membrane. The sequence is that of Transmembrane and ubiquitin-like domain-containing protein 2 (Tmub2) from Rattus norvegicus (Rat).